We begin with the raw amino-acid sequence, 33 residues long: ECLGWMKGCEPKNNKCCSSYVCTYKYPWCRYDL.

Cystine bridges form between Cys2/Cys17, Cys9/Cys22, and Cys16/Cys29.

It belongs to the neurotoxin 10 (Hwtx-1) family. 22 (Htx-4) subfamily. In terms of tissue distribution, expressed by the venom gland.

It localises to the secreted. In terms of biological role, voltage-gated sodium channel Nav1.7/SCN9A inhibitor. The polypeptide is Mu-theraphotoxin-Osp1b (Orphnaecus sp. (strain Maanghit-Cave/Philippines) (Tarantula spider)).